The primary structure comprises 671 residues: Envelope glycoprotein (671 aa).

The signal sequence occupies residues 1–22 (MKPPAGMVFLWVLTSLGAGIGA). Topologically, residues 23 to 611 (KIVKEGNPHQ…YNKSPWFTTL (589 aa)) are extracellular. 2 cysteine pairs are disulfide-bonded: C121/C142 and C134/C147. Residues N169 and N281 are each glycosylated (N-linked (GlcNAc...) asparagine; by host). Positions 265 to 310 (VQPPRAPTQTPRVNPVNSTLSPSLGYPAPAPGPRPPYPTSPSRPGT) are disordered. Positions 271-286 (PTQTPRVNPVNSTLSP) are enriched in polar residues. Residues 292–305 (APAPGPRPPYPTSP) are compositionally biased toward pro residues. N326 and N331 each carry an N-linked (GlcNAc...) asparagine; by host glycan. Positions 336–339 (CWLC) match the CXXC motif. N355, N358, N415, and N435 each carry an N-linked (GlcNAc...) asparagine; by host glycan. Residues 473–493 (VSLTVALLLGGLTMGSLAAGI) are fusion peptide. Coiled coils occupy residues 501–550 (IETN…LLFL) and 560–596 (KEECCFYADHTGIVRDSMAKLRERFKQRQKLFESQQG). Residues 539–555 (LQNRRGLDLLFLQEGGL) are immunosuppression. The CX6CC motif lies at 556–564 (CAALKEECC). A helical transmembrane segment spans residues 612 to 632 (VSSLMVPLILLLLILMFGPCI). A lipid anchor (S-palmitoyl cysteine; by host) is attached at C631. Residues 633–671 (LNHLLQFIRERLSVIQALVLTQQYHQLRQFDAERPDAIE) lie on the Cytoplasmic side of the membrane. Positions 656–659 (YHQL) match the YXXL motif; contains endocytosis signal motif.

In terms of assembly, the mature envelope protein (Env) consists of a trimer of SU-TM heterodimers attached by noncovalent interactions or by a labile interchain disulfide bond. Post-translationally, specific enzymatic cleavages in vivo yield mature proteins. Envelope glycoproteins are synthesized as an inactive precursor that is N-glycosylated and processed likely by host cell furin or by a furin-like protease in the Golgi to yield the mature SU and TM proteins. The cleavage site between SU and TM requires the minimal sequence [KR]-X-[KR]-R. The R-peptide is released from the C-terminus of the cytoplasmic tail of the TM protein upon particle formation as a result of proteolytic cleavage by the viral protease. Cleavage of this peptide is required for TM to become fusogenic. The transmembrane protein is palmitoylated. In terms of processing, the R-peptide is palmitoylated.

It is found in the virion membrane. The protein localises to the host cell membrane. In terms of biological role, the surface protein (SU) attaches the virus to the host cell by binding to its receptor. This interaction triggers the refolding of the transmembrane protein (TM) and is thought to activate its fusogenic potential by unmasking its fusion peptide. Fusion occurs at the host cell plasma membrane. The transmembrane protein (TM) acts as a class I viral fusion protein. Under the current model, the protein has at least 3 conformational states: pre-fusion native state, pre-hairpin intermediate state, and post-fusion hairpin state. During viral and target cell membrane fusion, the coiled coil regions (heptad repeats) assume a trimer-of-hairpins structure, positioning the fusion peptide in close proximity to the C-terminal region of the ectodomain. The formation of this structure appears to drive apposition and subsequent fusion of viral and target cell membranes. Membranes fusion leads to delivery of the nucleocapsid into the cytoplasm. The sequence is that of Envelope glycoprotein (env) from Felidae (cat family).